Reading from the N-terminus, the 239-residue chain is EF-hand domain-containing protein D1 (239 aa).

Over residues 1 to 18 (MASEELACKLERRLRREE) the composition is skewed to basic and acidic residues. The tract at residues 1 to 53 (MASEELACKLERRLRREEAEESGPQLAPLGAPAPEPKPEPEPPARAPTASADA) is disordered. EF-hand domains are found at residues 90 to 125 (RLIK…LGAP) and 126 to 161 (QTHL…AAAG). Ca(2+) is bound by residues Asp103, Asp107, Glu114, Asp139, Asp141, Asp143, Lys145, and Glu150. Residue Ser201 is modified to Phosphoserine.

Its subcellular location is the mitochondrion inner membrane. In terms of biological role, acts as a calcium sensor for mitochondrial flash (mitoflash) activation, an event characterized by stochastic bursts of superoxide production. May play a role in neuronal differentiation. The protein is EF-hand domain-containing protein D1 (EFHD1) of Homo sapiens (Human).